Consider the following 335-residue polypeptide: Dihydroorotate dehydrogenase (quinone) (335 aa).

Residues 59–63 (AGLDK) and threonine 83 contribute to the FMN site. Lysine 63 lines the substrate pocket. Residue 108–112 (NRMGF) participates in substrate binding. The FMN site is built by asparagine 136 and asparagine 169. A substrate-binding site is contributed by asparagine 169. The active-site Nucleophile is serine 172. A substrate-binding site is contributed by asparagine 174. FMN-binding residues include lysine 214 and threonine 242. Residue 243-244 (NT) participates in substrate binding. FMN is bound by residues glycine 265, glycine 294, and 315–316 (YS).

Belongs to the dihydroorotate dehydrogenase family. Type 2 subfamily. As to quaternary structure, monomer. FMN is required as a cofactor.

It localises to the cell membrane. The enzyme catalyses (S)-dihydroorotate + a quinone = orotate + a quinol. It functions in the pathway pyrimidine metabolism; UMP biosynthesis via de novo pathway; orotate from (S)-dihydroorotate (quinone route): step 1/1. In terms of biological role, catalyzes the conversion of dihydroorotate to orotate with quinone as electron acceptor. This is Dihydroorotate dehydrogenase (quinone) from Neisseria gonorrhoeae (strain ATCC 700825 / FA 1090).